We begin with the raw amino-acid sequence, 211 residues long: tRNA (guanine-N(7)-)-methyltransferase (211 aa).

S-adenosyl-L-methionine-binding residues include E44, D69, D96, and D118. D118 is an active-site residue. Residue K122 participates in substrate binding. The interval 124 to 129 (RHEKRR) is interaction with RNA. Substrate-binding positions include D154 and 191-194 (TEYE).

The protein belongs to the class I-like SAM-binding methyltransferase superfamily. TrmB family.

It carries out the reaction guanosine(46) in tRNA + S-adenosyl-L-methionine = N(7)-methylguanosine(46) in tRNA + S-adenosyl-L-homocysteine. It participates in tRNA modification; N(7)-methylguanine-tRNA biosynthesis. Functionally, catalyzes the formation of N(7)-methylguanine at position 46 (m7G46) in tRNA. The protein is tRNA (guanine-N(7)-)-methyltransferase of Streptococcus mutans serotype c (strain ATCC 700610 / UA159).